A 177-amino-acid polypeptide reads, in one-letter code: CASP-like protein 2U1 (177 aa).

Residues 1-21 traverse the membrane as a helical segment; that stretch reads MVLRIVASLLSIAALVLMAKD. Residues 22–48 are Cytoplasmic-facing; the sequence is KQVVYLNLAGEELTLEAKHSYVEAFVY. Residues 49 to 69 form a helical membrane-spanning segment; sequence LVYSNGLVAIYCFLLVFALVF. Over 70–80 the chain is Extracellular; that stretch reads RLIDKAGCGKS. Residues 81-101 traverse the membrane as a helical segment; it reads AAWIIFLLDQGLAYVLLAAAA. At 102 to 131 the chain is on the cytoplasmic side; the sequence is ASTEVAYVAKRGNNKVGWSEVCSTFGHFCN. A helical membrane pass occupies residues 132 to 152; the sequence is LVGVSIVITFISVLAMATLSV. The Extracellular segment spans residues 153 to 177; sequence MSARRLFKTYGPERKQISSNDAPAI.

It belongs to the Casparian strip membrane proteins (CASP) family. Homodimer and heterodimers.

The protein resides in the cell membrane. This is CASP-like protein 2U1 from Osmunda lancea (Fern).